Reading from the N-terminus, the 221-residue chain is Large ribosomal subunit protein uL3 (221 aa).

The protein belongs to the universal ribosomal protein uL3 family. Part of the 50S ribosomal subunit. Forms a cluster with proteins L14 and L19.

Its function is as follows. One of the primary rRNA binding proteins, it binds directly near the 3'-end of the 23S rRNA, where it nucleates assembly of the 50S subunit. The chain is Large ribosomal subunit protein uL3 from Chlamydia felis (strain Fe/C-56) (Chlamydophila felis).